A 318-amino-acid polypeptide reads, in one-letter code: tRNA pseudouridine synthase B (318 aa).

Asp-47 serves as the catalytic Nucleophile.

It belongs to the pseudouridine synthase TruB family. Type 1 subfamily.

The enzyme catalyses uridine(55) in tRNA = pseudouridine(55) in tRNA. In terms of biological role, responsible for synthesis of pseudouridine from uracil-55 in the psi GC loop of transfer RNAs. The polypeptide is tRNA pseudouridine synthase B (Colwellia psychrerythraea (strain 34H / ATCC BAA-681) (Vibrio psychroerythus)).